A 219-amino-acid polypeptide reads, in one-letter code: 2-hydroxy-3-keto-5-methylthiopentenyl-1-phosphate phosphatase (219 aa).

The protein belongs to the HAD-like hydrolase superfamily. MtnX family.

The catalysed reaction is 2-hydroxy-5-methylsulfanyl-3-oxopent-1-enyl phosphate + H2O = 1,2-dihydroxy-5-(methylsulfanyl)pent-1-en-3-one + phosphate. It functions in the pathway amino-acid biosynthesis; L-methionine biosynthesis via salvage pathway; L-methionine from S-methyl-5-thio-alpha-D-ribose 1-phosphate: step 4/6. Dephosphorylates 2-hydroxy-3-keto-5-methylthiopentenyl-1-phosphate (HK-MTPenyl-1-P) yielding 1,2-dihydroxy-3-keto-5-methylthiopentene (DHK-MTPene). The polypeptide is 2-hydroxy-3-keto-5-methylthiopentenyl-1-phosphate phosphatase (Bacillus cereus (strain G9842)).